We begin with the raw amino-acid sequence, 1744 residues long: Transcription initiation factor TFIID subunit 1 (1744 aa).

6 disordered regions span residues 1-65 (MNNT…EKNE), 248-275 (VSIR…APNS), 429-488 (PEDR…DNDP), 1001-1024 (QNQT…DSDN), 1071-1098 (TTNQ…SQFG), and 1186-1213 (MKKN…PPNP). The span at 43-52 (ACSSASNGGS) shows a compositional bias: polar residues. The segment covering 55-64 (VKMEPKVEKN) has biased composition (basic and acidic residues). Residues 429–439 (PEDRRHDEGPD) are compositionally biased toward basic and acidic residues. Residues 440-449 (HHHHHHHHRK) are compositionally biased toward basic residues. Residues 477–488 (ESTMAQFTDNDP) are compositionally biased toward polar residues. Residues 1012-1024 (STDDDSTDADSDN) are compositionally biased toward acidic residues. Coiled-coil stretches lie at residues 1019–1080 (DADS…KGEK), 1161–1204 (YAQM…TEKK), and 1282–1314 (NFAE…RQMA). 2 stretches are compositionally biased toward basic and acidic residues: residues 1076 to 1093 (EKGE…EKKS) and 1186 to 1205 (MKKN…EKKV). Over residues 1319–1344 (YGGGASSSGGAGGGGSGIGGSTGGGI) the composition is skewed to gly residues. The interval 1319 to 1391 (YGGGASSSGG…SKRRSSMMPE (73 aa)) is disordered. Residues 1354–1363 (SQISGTSSFL) show a composition bias toward polar residues. Low complexity predominate over residues 1372–1381 (GGNRNSSVSG). The Nuclear localization signal signature appears at 1379–1386 (VSGSKRRS). 2 consecutive Bromo domains span residues 1404 to 1512 (RARA…MIER) and 1537 to 1634 (YLLG…VKDQ). Acidic residues predominate over residues 1666–1694 (DHMDEMEDHPTEEEEEDDDDEIMDDDMDI). 2 disordered regions span residues 1666–1702 (DHMD…YSYD) and 1714–1744 (NDLA…LDSF).

The protein belongs to the TAF1 family. As to quaternary structure, component of the TFIID basal transcription factor complex, composed of TATA-box-binding protein tbp-1, and a number of TBP-associated factors (TAFs).

It localises to the nucleus. In terms of biological role, the TFIID basal transcription factor complex plays a major role in the initiation of RNA polymerase II (Pol II)-dependent transcription. TFIID recognizes and binds promoters via its subunit tbp-1, a TATA-box-binding protein, and promotes assembly of the pre-initiation complex (PIC). The TFIID complex consists of tbp-1 and TBP-associated factors (TAFs), including taf-1. May regulate RNA polymerase II activity and thereby may control transcription initiation by RNA polymerase II. Required for early embryonic development. Essential for embryonic transcription of several genes. This chain is Transcription initiation factor TFIID subunit 1, found in Caenorhabditis elegans.